The primary structure comprises 313 residues: Aspartate carbamoyltransferase catalytic subunit (313 aa).

Residues arginine 58 and threonine 59 each contribute to the carbamoyl phosphate site. An L-aspartate-binding site is contributed by lysine 86. Residues arginine 108, histidine 136, and glutamine 139 each coordinate carbamoyl phosphate. L-aspartate-binding residues include arginine 169 and arginine 223. Carbamoyl phosphate contacts are provided by glycine 264 and proline 265.

The protein belongs to the aspartate/ornithine carbamoyltransferase superfamily. ATCase family. As to quaternary structure, heterododecamer (2C3:3R2) of six catalytic PyrB chains organized as two trimers (C3), and six regulatory PyrI chains organized as three dimers (R2).

It catalyses the reaction carbamoyl phosphate + L-aspartate = N-carbamoyl-L-aspartate + phosphate + H(+). It participates in pyrimidine metabolism; UMP biosynthesis via de novo pathway; (S)-dihydroorotate from bicarbonate: step 2/3. In terms of biological role, catalyzes the condensation of carbamoyl phosphate and aspartate to form carbamoyl aspartate and inorganic phosphate, the committed step in the de novo pyrimidine nucleotide biosynthesis pathway. The polypeptide is Aspartate carbamoyltransferase catalytic subunit (Halothermothrix orenii (strain H 168 / OCM 544 / DSM 9562)).